The sequence spans 351 residues: MSASTTATLRHDWTLAEVKALFVQPFNDLLFQAQTVHRAHFDANRVQVSTLLSIKTGACPEDCKYCPQSGHYNTGLEKEKLLEVQKVLEEAARAKAIGSTRFCMGAAWKHPSAKDMPYVLEMVKGVKAMGLETCMTLGRLDQDQTEALAKAGLDYYNHNLDTSPEFYGNIITTRTYSERLQTLAYVRDAGMKICSGGILGMGESLDDRAGLLIQLANLPEHPESVPINMLVKVAGTPLENAEEVDPFDFIRMLAVARILMPQSHVRLSAGREAMNEQMQALAFFAGANSIFYGDKLLTTANPQADKDMQLFARLGIQPEAREEHADEVHQAAIEQALVEQKSSEQFYNAAV.

The Radical SAM core domain occupies 44–262; the sequence is NRVQVSTLLS…LAVARILMPQ (219 aa). [4Fe-4S] cluster contacts are provided by Cys59, Cys63, and Cys66. Positions 103, 134, 194, and 266 each coordinate [2Fe-2S] cluster.

The protein belongs to the radical SAM superfamily. Biotin synthase family. As to quaternary structure, homodimer. It depends on [4Fe-4S] cluster as a cofactor. The cofactor is [2Fe-2S] cluster.

The enzyme catalyses (4R,5S)-dethiobiotin + (sulfur carrier)-SH + 2 reduced [2Fe-2S]-[ferredoxin] + 2 S-adenosyl-L-methionine = (sulfur carrier)-H + biotin + 2 5'-deoxyadenosine + 2 L-methionine + 2 oxidized [2Fe-2S]-[ferredoxin]. The protein operates within cofactor biosynthesis; biotin biosynthesis; biotin from 7,8-diaminononanoate: step 2/2. Its function is as follows. Catalyzes the conversion of dethiobiotin (DTB) to biotin by the insertion of a sulfur atom into dethiobiotin via a radical-based mechanism. The polypeptide is Biotin synthase (Pseudomonas fluorescens (strain ATCC BAA-477 / NRRL B-23932 / Pf-5)).